A 251-amino-acid chain; its full sequence is MSEGESKSTHFGYKTVEADKKAELVAGVFHSVAAKYDIMNDVMSFGIHRFWKRYTIEVSGARPGMKVLDLAGGTGDLTAKFSHLVGDKGEVVLADINDSMLKVGRTKLRDKGIVNNVSYVQANAEALPFPDNHFDIITIAFGLRNVTDKDAALRSMNRVLKPGGKLLVLEFSKPQHEIMRKVYDLYSFKVLPKMGELITKDADSYEYLAESIRMHPDQDTLKQMMVDAGFEQVDYTNMTDGIVALHRGYKF.

Residues T74, D95, and 123–124 (NA) contribute to the S-adenosyl-L-methionine site.

Belongs to the class I-like SAM-binding methyltransferase superfamily. MenG/UbiE family.

It carries out the reaction a 2-demethylmenaquinol + S-adenosyl-L-methionine = a menaquinol + S-adenosyl-L-homocysteine + H(+). The catalysed reaction is a 2-methoxy-6-(all-trans-polyprenyl)benzene-1,4-diol + S-adenosyl-L-methionine = a 5-methoxy-2-methyl-3-(all-trans-polyprenyl)benzene-1,4-diol + S-adenosyl-L-homocysteine + H(+). Its pathway is quinol/quinone metabolism; menaquinone biosynthesis; menaquinol from 1,4-dihydroxy-2-naphthoate: step 2/2. The protein operates within cofactor biosynthesis; ubiquinone biosynthesis. Its function is as follows. Methyltransferase required for the conversion of demethylmenaquinol (DMKH2) to menaquinol (MKH2) and the conversion of 2-polyprenyl-6-methoxy-1,4-benzoquinol (DDMQH2) to 2-polyprenyl-3-methyl-6-methoxy-1,4-benzoquinol (DMQH2). This Shewanella baltica (strain OS155 / ATCC BAA-1091) protein is Ubiquinone/menaquinone biosynthesis C-methyltransferase UbiE.